A 162-amino-acid polypeptide reads, in one-letter code: Phosphopantetheine adenylyltransferase (162 aa).

S9 contacts substrate. ATP is bound by residues 9–10 (SF) and H17. Substrate contacts are provided by K41, T73, and R87. Residues 88–90 (GLR), E98, and 123–129 (YSFISSS) each bind ATP.

This sequence belongs to the bacterial CoaD family. Homohexamer. Mg(2+) serves as cofactor.

It localises to the cytoplasm. It carries out the reaction (R)-4'-phosphopantetheine + ATP + H(+) = 3'-dephospho-CoA + diphosphate. The protein operates within cofactor biosynthesis; coenzyme A biosynthesis; CoA from (R)-pantothenate: step 4/5. Functionally, reversibly transfers an adenylyl group from ATP to 4'-phosphopantetheine, yielding dephospho-CoA (dPCoA) and pyrophosphate. In Carboxydothermus hydrogenoformans (strain ATCC BAA-161 / DSM 6008 / Z-2901), this protein is Phosphopantetheine adenylyltransferase.